Consider the following 133-residue polypeptide: Capsid protein (133 aa).

This sequence belongs to the Leviviricetes capsid protein family. Homodimer. The homodimers binds to the viral RNA via an operator hairpin, but also to many other RNA sequences in the viral genome; this interaction probably shifts the virus from the replicative to the assembly phase and ensures specific encapsidation of the viral genome. Interacts with the maturation protein A2.

The protein resides in the virion. Capsid protein self-assembles to form an icosahedral capsid with a T=3 symmetry, about 26 nm in diameter, and consisting of 89 capsid proteins dimers (178 capsid proteins). Involved in viral genome encapsidation through the interaction between a capsid protein dimer and the multiple packaging signals present in the RNA genome. Binding of the capsid proteins to the viral RNA induces a conformational change required for efficient T=3 shell formation. The capsid also contains 1 copy of the A2 maturation protein. Its function is as follows. Acts as a translational repressor of viral replicase synthesis late in infection. This latter function is the result of capsid protein interaction with an RNA hairpin which contains the replicase ribosome-binding site. The protein is Capsid protein of Escherichia virus Qbeta (Bacteriophage Q-beta).